Here is a 226-residue protein sequence, read N- to C-terminus: Protein AF-9 homolog (226 aa).

A YEATS domain is found at 8 to 169; it reads RIKTLSVSRP…EEFFKILMSR (162 aa). The stretch at 187 to 224 forms a coiled coil; it reads QLEQEEIDRIEIGIEKVDKEIDELKQKLENLVKQEAIN.

Component of the SWR1 chromatin-remodeling complex composed of at least ACT1, ARP4, RVB1, RVB2, ARP6, YAF9, VPS71, VPS72, SWC3, SWC4, SWC5, SWC7 and SWR1, and perhaps BDF1. Component of the NuA4 histone acetyltransferase complex composed of at least ACT1, ARP4, YAF9, VID21, SWC4, EAF3, EAF5, EAF6, EAF7, EPL1, ESA1, TRA1 and YNG2. Interacts with SWC4.

Its subcellular location is the cytoplasm. The protein resides in the nucleus. Its function is as follows. Component of the SWR1 complex which mediates the ATP-dependent exchange of histone H2A for the H2A variant HZT1 leading to transcriptional regulation of selected genes by chromatin remodeling. Component of the NuA4 histone acetyltransferase complex which is involved in transcriptional activation of selected genes principally by acetylation of nucleosomal histones H4 and H2A. The NuA4 complex is also involved in DNA repair. Yaf9 may also be required for viability in conditions in which the structural integrity of the spindle is compromised. The sequence is that of Protein AF-9 homolog (YAF9) from Saccharomyces cerevisiae (strain ATCC 204508 / S288c) (Baker's yeast).